The primary structure comprises 227 residues: Cytochrome c oxidase subunit 2 (227 aa).

At 1-14 (MAYPFQLGLQDATS) the chain is on the mitochondrial intermembrane side. The chain crosses the membrane as a helical span at residues 15–45 (PIMEELMNFHDHTLMIVFLISSLVLYIISLM). The Mitochondrial matrix portion of the chain corresponds to 46-59 (LTTKLTHTSTMDAQ). The chain crosses the membrane as a helical span at residues 60–87 (EVETIWTILPAVILILIALPSLRILYMM). Over 88–227 (DEINNPVLTV…NFENWSASMI (140 aa)) the chain is Mitochondrial intermembrane. The Cu cation site is built by His161, Cys196, Glu198, Cys200, His204, and Met207. Residue Glu198 coordinates Mg(2+).

It belongs to the cytochrome c oxidase subunit 2 family. In terms of assembly, component of the cytochrome c oxidase (complex IV, CIV), a multisubunit enzyme composed of 14 subunits. The complex is composed of a catalytic core of 3 subunits MT-CO1, MT-CO2 and MT-CO3, encoded in the mitochondrial DNA, and 11 supernumerary subunits COX4I, COX5A, COX5B, COX6A, COX6B, COX6C, COX7A, COX7B, COX7C, COX8 and NDUFA4, which are encoded in the nuclear genome. The complex exists as a monomer or a dimer and forms supercomplexes (SCs) in the inner mitochondrial membrane with NADH-ubiquinone oxidoreductase (complex I, CI) and ubiquinol-cytochrome c oxidoreductase (cytochrome b-c1 complex, complex III, CIII), resulting in different assemblies (supercomplex SCI(1)III(2)IV(1) and megacomplex MCI(2)III(2)IV(2)). Found in a complex with TMEM177, COA6, COX18, COX20, SCO1 and SCO2. Interacts with TMEM177 in a COX20-dependent manner. Interacts with COX20. Interacts with COX16. Requires Cu cation as cofactor.

It is found in the mitochondrion inner membrane. The enzyme catalyses 4 Fe(II)-[cytochrome c] + O2 + 8 H(+)(in) = 4 Fe(III)-[cytochrome c] + 2 H2O + 4 H(+)(out). In terms of biological role, component of the cytochrome c oxidase, the last enzyme in the mitochondrial electron transport chain which drives oxidative phosphorylation. The respiratory chain contains 3 multisubunit complexes succinate dehydrogenase (complex II, CII), ubiquinol-cytochrome c oxidoreductase (cytochrome b-c1 complex, complex III, CIII) and cytochrome c oxidase (complex IV, CIV), that cooperate to transfer electrons derived from NADH and succinate to molecular oxygen, creating an electrochemical gradient over the inner membrane that drives transmembrane transport and the ATP synthase. Cytochrome c oxidase is the component of the respiratory chain that catalyzes the reduction of oxygen to water. Electrons originating from reduced cytochrome c in the intermembrane space (IMS) are transferred via the dinuclear copper A center (CU(A)) of subunit 2 and heme A of subunit 1 to the active site in subunit 1, a binuclear center (BNC) formed by heme A3 and copper B (CU(B)). The BNC reduces molecular oxygen to 2 water molecules using 4 electrons from cytochrome c in the IMS and 4 protons from the mitochondrial matrix. This chain is Cytochrome c oxidase subunit 2 (MT-CO2), found in Maxomys bartelsii (Bartels's Javan maxomys).